A 622-amino-acid polypeptide reads, in one-letter code: Apical membrane antigen 1 (622 aa).

An N-terminal signal peptide occupies residues 1 to 24; that stretch reads MRKLYCVLLLSAFEFTYMINFGRG. The Extracellular segment spans residues 25 to 546; it reads QNYWEHPYQN…EHKPTYDNMK (522 aa). 5 cysteine pairs are disulfide-bonded: Cys-149-Cys-302, Cys-217-Cys-247, Cys-263-Cys-275, Cys-320-Cys-418, and Cys-337-Cys-409. N-linked (GlcNAc...) asparagine glycosylation is found at Asn-286, Asn-371, Asn-421, Asn-422, and Asn-499. 3 cysteine pairs are disulfide-bonded: Cys-443–Cys-502, Cys-490–Cys-507, and Cys-492–Cys-509. Residues 547–567 traverse the membrane as a helical segment; it reads IIIASSAAVAVLATILMVYLY. Topologically, residues 568 to 622 are cytoplasmic; sequence KRKGNAEKYDKMDEPQDYGKSTSRNDEMLDPEASFWGEEKRASHTTPVLMEKPYY. Residues 577–607 form a disordered region; that stretch reads DKMDEPQDYGKSTSRNDEMLDPEASFWGEEK.

This sequence belongs to the apicomplexan parasites AMA1 family.

It localises to the membrane. In terms of biological role, involved in parasite invasion of erythrocytes. In Plasmodium falciparum (isolate thtn / Thailand), this protein is Apical membrane antigen 1 (AMA-1).